The following is a 151-amino-acid chain: UPF0208 membrane protein YPTB2595 (151 aa).

2 consecutive transmembrane segments (helical) span residues 46-66 (FGIRFMPPLAIFTLTWQIALG) and 69-89 (LGPAIATALFACGLPLQGLWW).

The protein belongs to the UPF0208 family.

It localises to the cell inner membrane. The protein is UPF0208 membrane protein YPTB2595 of Yersinia pseudotuberculosis serotype I (strain IP32953).